A 196-amino-acid polypeptide reads, in one-letter code: Peptidyl-tRNA hydrolase (196 aa).

Tyr-14 provides a ligand contact to tRNA. The Proton acceptor role is filled by His-19. Positions 64, 66, and 112 each coordinate tRNA.

The protein belongs to the PTH family. As to quaternary structure, monomer.

The protein resides in the cytoplasm. The enzyme catalyses an N-acyl-L-alpha-aminoacyl-tRNA + H2O = an N-acyl-L-amino acid + a tRNA + H(+). In terms of biological role, hydrolyzes ribosome-free peptidyl-tRNAs (with 1 or more amino acids incorporated), which drop off the ribosome during protein synthesis, or as a result of ribosome stalling. Catalyzes the release of premature peptidyl moieties from peptidyl-tRNA molecules trapped in stalled 50S ribosomal subunits, and thus maintains levels of free tRNAs and 50S ribosomes. This Solibacter usitatus (strain Ellin6076) protein is Peptidyl-tRNA hydrolase.